The sequence spans 337 residues: Putative 2-aminoethylphosphonate-binding periplasmic protein (337 aa).

A signal peptide spans 1–21 (MKLSRLALLSVFALASAPSWA).

The protein belongs to the bacterial solute-binding protein 1 family.

It is found in the periplasm. Functionally, probably part of the PhnSTUV complex (TC 3.A.1.11.5) involved in 2-aminoethylphosphonate import. This is Putative 2-aminoethylphosphonate-binding periplasmic protein (phnS) from Salmonella typhimurium (strain LT2 / SGSC1412 / ATCC 700720).